A 460-amino-acid chain; its full sequence is MGKGDKTHINIVVIGHVDSGKSTTTGHLIYKCGGIDKRTIEKFEKEAQEMGKGSFKYAWVLDKLKAERERGITIDIALWKFETAKFYVTIIDAPGHRDFIKNMITGTSQADCAVLVVACGTGEFEAGISKNGQTREHALLAQTLGVKQMIVACNKMDSTEPPFSEKRFDEIVTEVKSFLKKVGYNPATIPFVPISGFNGDNMLEPSSNMSWYKGWSVERKEGNASGKTLIEALDCIIPPQRPTDRPLRLPLQDVYKIGGIGTVPVGRVETGVIKPGMVVTFAPQNVTTEVKSVEMHHESLPEASPGDNVGFNVKNVSVKDIRRGSVCSDSKNDPAKESKNFTAQVIVMNHPGQISAGYTPVLDCHTAHIACKFAELKEKVDRRTGKSTEASPKFLKSGDAGIVELIPTKPPCVESFTDYAPLGRFAVRDMRQTVAVGVIKSVTKDDGSGGKVTKSAAKKK.

In terms of domain architecture, tr-type G spans 6-243; the sequence is KTHINIVVIG…DCIIPPQRPT (238 aa). The G1 stretch occupies residues 15 to 22; it reads GHVDSGKS. The tract at residues 71-75 is G2; it reads GITID. A G3 region spans residues 92–95; that stretch reads DAPG. The segment at 154 to 157 is G4; sequence NKMD. Residues 195–197 form a G5 region; the sequence is SGF. 2 positions are modified to 5-glutamyl glycerylphosphorylethanolamine: glutamate 302 and glutamate 375.

It belongs to the TRAFAC class translation factor GTPase superfamily. Classic translation factor GTPase family. EF-Tu/EF-1A subfamily.

It is found in the cytoplasm. This protein promotes the GTP-dependent binding of aminoacyl-tRNA to the A-site of ribosomes during protein biosynthesis. The polypeptide is Elongation factor 1-alpha 3 (eft-3) (Oscheius tipulae).